We begin with the raw amino-acid sequence, 255 residues long: Taurine import ATP-binding protein TauB (255 aa).

The ABC transporter domain maps to 2–229 (LQISHLYADY…RFVAGESSRS (228 aa)). 34-41 (GPSGCGKT) contributes to the ATP binding site.

The protein belongs to the ABC transporter superfamily. Taurine importer (TC 3.A.1.17.1) family. As to quaternary structure, the complex is composed of two ATP-binding proteins (TauB), two transmembrane proteins (TauC) and a solute-binding protein (TauA).

It is found in the cell inner membrane. It catalyses the reaction taurine(out) + ATP + H2O = taurine(in) + ADP + phosphate + H(+). Functionally, part of the ABC transporter complex TauABC involved in taurine import. Responsible for energy coupling to the transport system. The polypeptide is Taurine import ATP-binding protein TauB (Escherichia coli O6:H1 (strain CFT073 / ATCC 700928 / UPEC)).